The chain runs to 245 residues: Probable phosphatase YcdX (245 aa).

Zn(2+) is bound by residues H7, H9, H15, H40, E73, H101, H131, D192, and H194.

The protein belongs to the PHP family. In terms of assembly, homotrimer. Requires Zn(2+) as cofactor.

The chain is Probable phosphatase YcdX from Salmonella agona (strain SL483).